Reading from the N-terminus, the 313-residue chain is METTTTTLGGGGGGRAGGFSDPPSPLSPPLSPASAAAAALANARWTPTKEQIAVLEGLYRQGLRTPTAEQIQQITARLREHGHIEGKNVFYWFQNHKARQRQKQKQQSFDYFSKLFRRPPPLPVLHRPLARPFPLAMAPTAMPPPPPPPATTTTAACNAGGVMFRTPSFMPVATNNASYYPQQQTPLLYPGMEVCPHDKSTAQPPATTTMYLQAPPSSAHLAAAAGRGAAEAEGHGRRGGGAGGRETLQLFPLQPTFVLPDHKPLRAGSACAAVSPTTPSASASFSWESESSDSPSSEAPPFYDFFGVHSGGR.

Residues 1-32 (METTTTTLGGGGGGRAGGFSDPPSPLSPPLSP) are disordered. Positions 8–17 (LGGGGGGRAG) are enriched in gly residues. Residues 22–31 (PPSPLSPPLS) show a composition bias toward pro residues. A DNA-binding region (homeobox; WUS-type) is located at residues 40–104 (LANARWTPTK…NHKARQRQKQ (65 aa)). Disordered regions lie at residues 224 to 247 (AAGR…GRET) and 271 to 313 (CAAV…SGGR). Positions 271 to 301 (CAAVSPTTPSASASFSWESESSDSPSSEAPP) are enriched in low complexity.

It belongs to the WUS homeobox family.

It localises to the nucleus. In terms of biological role, transcription factor which may be involved in developmental processes. The sequence is that of WUSCHEL-related homeobox 5 (WOX5) from Oryza sativa subsp. japonica (Rice).